The following is a 1241-amino-acid chain: ATP-dependent helicase/nuclease subunit A (1241 aa).

The 474-residue stretch at 12–485 (SQWTDDQWKA…IDLAKNFRSR (474 aa)) folds into the UvrD-like helicase ATP-binding domain. 33–40 (AAAGSGKT) lines the ATP pocket. Residues 505-805 (GEIDYDADAE…RIMTIHKSKG (301 aa)) enclose the UvrD-like helicase C-terminal domain.

This sequence belongs to the helicase family. AddA subfamily. In terms of assembly, heterodimer of AddA and AddB/RexB. The cofactor is Mg(2+).

It catalyses the reaction Couples ATP hydrolysis with the unwinding of duplex DNA by translocating in the 3'-5' direction.. The enzyme catalyses ATP + H2O = ADP + phosphate + H(+). Its function is as follows. The heterodimer acts as both an ATP-dependent DNA helicase and an ATP-dependent, dual-direction single-stranded exonuclease. Recognizes the chi site generating a DNA molecule suitable for the initiation of homologous recombination. The AddA nuclease domain is required for chi fragment generation; this subunit has the helicase and 3' -&gt; 5' nuclease activities. The polypeptide is ATP-dependent helicase/nuclease subunit A (Bacillus cereus (strain ZK / E33L)).